The primary structure comprises 205 residues: Regulator of G-protein signaling 4 (205 aa).

S-palmitoyl cysteine attachment occurs at residues cysteine 2, cysteine 12, and cysteine 95. One can recognise an RGS domain in the interval 62–178 (SLENLISHEC…LKSRFYLDLV (117 aa)).

Post-translationally, palmitoylated on Cys-2 and/or Cys-12. In terms of processing, phosphorylated by cyclic GMP-dependent protein kinase.

Functionally, inhibits signal transduction by increasing the GTPase activity of G protein alpha subunits thereby driving them into their inactive GDP-bound form. Activity on G(z)-alpha is inhibited by phosphorylation of the G-protein. Activity on G(z)-alpha and G(i)-alpha-1 is inhibited by palmitoylation of the G-protein. This is Regulator of G-protein signaling 4 (RGS4) from Bos taurus (Bovine).